Here is a 619-residue protein sequence, read N- to C-terminus: E3 ubiquitin-protein ligase complex SLX5-SLX8 subunit SLX5 (619 aa).

The tract at residues 1–23 (MHSDTNGRTKSNNSPSDNNPNET) is disordered. Positions 11 to 21 (SNNSPSDNNPN) are enriched in low complexity. A phosphoserine mark is found at serine 14 and serine 29. The tract at residues 63–90 (VRSDSRSRNSQRTHITASSERPDFQANN) is disordered. A compositionally biased stretch (polar residues) spans 70 to 90 (RNSQRTHITASSERPDFQANN). The interval 201-335 (SRRQLLRRSA…ALFTEFRNQL (135 aa)) is EUC1 interaction domain.

In terms of assembly, component of the heterodimeric SUMO-targeted ubiquitin ligase (STUbL) complex composed of SLX5 and SLX8. Interacts with sirtuin SIR2. Interacts with KAR9. Interacts with EUC1.

Its subcellular location is the nucleus. It is found in the chromosome. It localises to the centromere. The protein resides in the kinetochore. The enzyme catalyses S-ubiquitinyl-[E2 ubiquitin-conjugating enzyme]-L-cysteine + [acceptor protein]-L-lysine = [E2 ubiquitin-conjugating enzyme]-L-cysteine + N(6)-ubiquitinyl-[acceptor protein]-L-lysine.. It functions in the pathway protein modification; protein ubiquitination. In terms of biological role, component of the SUMO-targeted ubiquitin ligase (STUbL) complex SLX5/SLX8 that mediates ubiquitination and subsequent desumoylation of sumoylated proteins and proteins containing SUMO-like domains for their degradation. The STUbL complex SLX5/SLX8 stimulates ubiquitin conjugating enzymes, including UBC1, UBC4, UBC5 and UBC13-MMS2, and mediates the proteolytic down-regulation of sumoylated proteins. The STUbL complex SLX5/SLX8 is involved in ubiquitin-mediated degradation of histone variant CSE4, preventing mislocalization to euchromatin. The complex plays an essential role in maintenance of chromosome stability and links SUMO-dependent ubiquitination to a centromere-specific function during mitosis. The complex is involved in proteolysis of spindle positioning protein KAR9 and ensures correct spindle function by regulating levels of microtubule-associated proteins. During replication, the complex helps prevent DNA lesions via recombination and has a role in localizing the DNA damage protein DCD2. The complex especially ubiquitinates the nuclease YEN1 and prevents persistent accumulation of a fraction of YEN1 associated with sites of activity in late G2/M and helps maintain the balance between pro- and anti-crossover pathways during homologous recombination. It is also involved in ubiquitin-mediated degradation of DNA repair proteins RAD52 and RAD57. Along with SIR2, promotes silencing of genes at telomeric or ribosomal DNA (rDNA) loci. Finally, the complex is recruited to distinct genomic hotspots of non-H2B protein ubiquitination (ub-hotspots) by the sumoylated transcription factor-like protein EUC1 where it ubiquitinates EUC1 and presumably other targets. The polypeptide is E3 ubiquitin-protein ligase complex SLX5-SLX8 subunit SLX5 (SLX5) (Saccharomyces cerevisiae (strain ATCC 204508 / S288c) (Baker's yeast)).